The following is a 650-amino-acid chain: Rab proteins geranylgeranyltransferase component A 1 (650 aa).

Disordered stretches follow at residues 156–208 (IPAE…ETPK) and 603–650 (PAPP…EPSE). Residues 177–190 (ATGKKENSDAKSST) show a composition bias toward basic and acidic residues. Over residues 616-634 (DSSQQEVPESSVTPETNSE) the composition is skewed to polar residues.

It belongs to the Rab GDI family. In terms of assembly, monomer. Heterotrimer composed of RABGGTA, RABGGTB and CHM; within this trimer, RABGGTA and RABGGTB form the catalytic component B, while CHM (component A) mediates Rab protein binding. Can associate with the Rab GGTase dimer (RGGT or component B) prior to Rab protein binding; the association is stabilized by geranylgeranyl pyrophosphate (GGpp). The CHM:RGGT:Rab complex is destabilized by GGpp. Interacts with RAB1A, RAB1B, RAB7A and RAB27A and mediates their prenylation. Interacts with RAB5A. Interacts with the non-phosphorylated forms of RAB3A, RAB3B, RAB3C, RAB3D, RAB5B, RAB5C RAB8A, RAB8B, RAB10, RAB12, RAB35, and RAB43. In terms of tissue distribution, most abundant in the heart, brain, and spleen. Lower levels seen in the lung, liver, muscle and kidney. Extremely low levels seen in the testis.

It is found in the cytoplasm. It localises to the cytosol. In terms of biological role, substrate-binding subunit of the Rab geranylgeranyltransferase (GGTase) complex. Binds unprenylated Rab proteins and presents the substrate peptide to the catalytic component B composed of RABGGTA and RABGGTB, and remains bound to it after the geranylgeranyl transfer reaction. The component A is thought to be regenerated by transferring its prenylated Rab back to the donor membrane. Besides, a pre-formed complex consisting of CHM and the Rab GGTase dimer (RGGT or component B) can bind to and prenylate Rab proteins; this alternative pathway is proposed to be the predominant pathway for Rab protein geranylgeranylation. The chain is Rab proteins geranylgeranyltransferase component A 1 (Chm) from Rattus norvegicus (Rat).